We begin with the raw amino-acid sequence, 208 residues long: U11/U12 small nuclear ribonucleoprotein 35 kDa protein (208 aa).

An RRM domain is found at 50 to 128; sequence LTLFVARLNP…YELLVDVEQE (79 aa). The disordered stretch occupies residues 133–208; it reads GWRPRRLGGG…TEDRTHRHTY (76 aa). The span at 171–208 shows a compositional bias: basic and acidic residues; the sequence is RPAEPRGRETERERDRRDYRDRRHERTHTEDRTHRHTY.

Its subcellular location is the nucleus. The sequence is that of U11/U12 small nuclear ribonucleoprotein 35 kDa protein (snrnp35) from Danio rerio (Zebrafish).